Here is a 500-residue protein sequence, read N- to C-terminus: L-arabinose isomerase (500 aa).

Residues E306, E333, H350, and H450 each coordinate Mn(2+).

The protein belongs to the arabinose isomerase family. Homohexamer. Requires Mn(2+) as cofactor.

The enzyme catalyses beta-L-arabinopyranose = L-ribulose. Its pathway is carbohydrate degradation; L-arabinose degradation via L-ribulose; D-xylulose 5-phosphate from L-arabinose (bacterial route): step 1/3. Its function is as follows. Catalyzes the conversion of L-arabinose to L-ribulose. This is L-arabinose isomerase from Escherichia coli O6:H1 (strain CFT073 / ATCC 700928 / UPEC).